The chain runs to 763 residues: Phosphoglycerol transferase I (763 aa).

4 helical membrane passes run 1 to 21 (MSELLSVALFLASVLIYAWKA), 26 to 46 (WWFAATLTVLGLFVILNITLY), 77 to 97 (ILPGIGIALALVAVFGALGWV), and 108 to 128 (VGYSLLALLLALGSVDASPAF).

This sequence belongs to the OpgB family.

It localises to the cell inner membrane. It carries out the reaction a phosphatidylglycerol + a membrane-derived-oligosaccharide D-glucose = a 1,2-diacyl-sn-glycerol + a membrane-derived-oligosaccharide 6-(glycerophospho)-D-glucose.. Its pathway is glycan metabolism; osmoregulated periplasmic glucan (OPG) biosynthesis. In terms of biological role, transfers a phosphoglycerol residue from phosphatidylglycerol to the membrane-bound nascent glucan backbones. This chain is Phosphoglycerol transferase I, found in Salmonella heidelberg (strain SL476).